Here is a 126-residue protein sequence, read N- to C-terminus: Large ribosomal subunit protein uL22 (126 aa).

This sequence belongs to the universal ribosomal protein uL22 family. As to quaternary structure, part of the 50S ribosomal subunit.

This protein binds specifically to 23S rRNA; its binding is stimulated by other ribosomal proteins, e.g. L4, L17, and L20. It is important during the early stages of 50S assembly. It makes multiple contacts with different domains of the 23S rRNA in the assembled 50S subunit and ribosome. Its function is as follows. The globular domain of the protein is located near the polypeptide exit tunnel on the outside of the subunit, while an extended beta-hairpin is found that lines the wall of the exit tunnel in the center of the 70S ribosome. This chain is Large ribosomal subunit protein uL22, found in Dinoroseobacter shibae (strain DSM 16493 / NCIMB 14021 / DFL 12).